A 92-amino-acid chain; its full sequence is Cell division protein FtsB (92 aa).

The Cytoplasmic segment spans residues 1 to 3 (MRL). Residues 4–21 (LILILLSVLVLFQYNFWF) form a helical membrane-spanning segment. The Periplasmic segment spans residues 22–92 (GSNGFLDYRQ…VFYHIVKESK (71 aa)). Residues 28–63 (DYRQNAEKIKENQAENEKLSQRNQRINAEIQGLTKG) adopt a coiled-coil conformation.

It belongs to the FtsB family. As to quaternary structure, part of a complex composed of FtsB, FtsL and FtsQ.

The protein localises to the cell inner membrane. Essential cell division protein. May link together the upstream cell division proteins, which are predominantly cytoplasmic, with the downstream cell division proteins, which are predominantly periplasmic. In Haemophilus influenzae (strain 86-028NP), this protein is Cell division protein FtsB.